The primary structure comprises 326 residues: Macrosialin (326 aa).

An N-terminal signal peptide occupies residues 1 to 20 (MRLPVCLILLGPLIAQGTEE). Residues 21 to 109 (DCPHKKAVTL…ATSPRSSTVG (89 aa)) are mucin-like. Residues 21 to 291 (DCPHKKAVTL…PCFSCNRDQS (271 aa)) are Extracellular-facing. Residues 38–58 (PTATESTASPTTSHRPTTTSH) show a composition bias toward low complexity. The disordered stretch occupies residues 38 to 129 (PTATESTASP…SPRSKGALGN (92 aa)). 4 repeat units span residues 44-49 (TASPTT), 50-64 (SHRPTTTSHGNVTVH), 65-72 (TSSGPTTV), and 73-88 (THNPATTTSHGNATIS). Over residues 59–69 (GNVTVHTSSGP) the composition is skewed to polar residues. Residue asparagine 60 is glycosylated (N-linked (GlcNAc...) asparagine). Residues 70–80 (TTVTHNPATTT) show a composition bias toward low complexity. Residues 81 to 108 (SHGNATISHATVSPTTNGTATSPRSSTV) are compositionally biased toward polar residues. N-linked (GlcNAc...) asparagine glycosylation is found at asparagine 84 and asparagine 97. Residues 111–120 (HPGPPPPSPS) show a composition bias toward pro residues. N-linked (GlcNAc...) asparagine glycosylation is found at asparagine 129, asparagine 134, asparagine 169, asparagine 218, asparagine 233, and asparagine 251. Cysteine 139 and cysteine 177 are joined by a disulfide. Cysteine 249 and cysteine 286 are disulfide-bonded. The chain crosses the membrane as a helical span at residues 292–316 (LLLPLIIGLVLLGLLTLVLIAFCIT). The Cytoplasmic portion of the chain corresponds to 317–326 (RRRQSTYQPL).

It belongs to the LAMP family. N- and O-glycosylated. In terms of tissue distribution, expressed in tissue macrophages and to a lesser extent in dendritic cells.

It is found in the endosome membrane. Its subcellular location is the lysosome membrane. The protein localises to the cell membrane. Could play a role in phagocytic activities of tissue macrophages, both in intracellular lysosomal metabolism and extracellular cell-cell and cell-pathogen interactions. Binds to tissue- and organ-specific lectins or selectins, allowing homing of macrophage subsets to particular sites. Rapid recirculation of CD68 from endosomes and lysosomes to the plasma membrane may allow macrophages to crawl over selectin-bearing substrates or other cells. This is Macrosialin (Cd68) from Mus musculus (Mouse).